Consider the following 490-residue polypeptide: Thiamine biosynthesis bifunctional protein ThiED (490 aa).

The thiamine-phosphate synthase stretch occupies residues Met1–Ile213. Residues Gln50–Lys54 and Asn82 each bind 4-amino-2-methyl-5-(diphosphooxymethyl)pyrimidine. The Mg(2+) site is built by Asp83 and Asp102. Position 121 (Ser121) interacts with 4-amino-2-methyl-5-(diphosphooxymethyl)pyrimidine. Residue Ser147–Ser149 participates in 2-[(2R,5Z)-2-carboxy-4-methylthiazol-5(2H)-ylidene]ethyl phosphate binding. Residue Lys150 coordinates 4-amino-2-methyl-5-(diphosphooxymethyl)pyrimidine. Residues Gly177 and Ile197–Ser198 each bind 2-[(2R,5Z)-2-carboxy-4-methylthiazol-5(2H)-ylidene]ethyl phosphate. Residues Leu229 to Arg490 are hydroxymethylpyrimidine/phosphomethylpyrimidine kinase. Gln266 is a binding site for 4-amino-5-hydroxymethyl-2-methylpyrimidine.

In the N-terminal section; belongs to the thiamine-phosphate synthase family. The protein in the C-terminal section; belongs to the ThiD family. Requires Mg(2+) as cofactor.

The catalysed reaction is 2-[(2R,5Z)-2-carboxy-4-methylthiazol-5(2H)-ylidene]ethyl phosphate + 4-amino-2-methyl-5-(diphosphooxymethyl)pyrimidine + 2 H(+) = thiamine phosphate + CO2 + diphosphate. It catalyses the reaction 2-(2-carboxy-4-methylthiazol-5-yl)ethyl phosphate + 4-amino-2-methyl-5-(diphosphooxymethyl)pyrimidine + 2 H(+) = thiamine phosphate + CO2 + diphosphate. The enzyme catalyses 4-methyl-5-(2-phosphooxyethyl)-thiazole + 4-amino-2-methyl-5-(diphosphooxymethyl)pyrimidine + H(+) = thiamine phosphate + diphosphate. It carries out the reaction 4-amino-5-hydroxymethyl-2-methylpyrimidine + ATP = 4-amino-2-methyl-5-(phosphooxymethyl)pyrimidine + ADP + H(+). The catalysed reaction is 4-amino-2-methyl-5-(phosphooxymethyl)pyrimidine + ATP = 4-amino-2-methyl-5-(diphosphooxymethyl)pyrimidine + ADP. It functions in the pathway cofactor biosynthesis; thiamine diphosphate biosynthesis; 4-amino-2-methyl-5-diphosphomethylpyrimidine from 5-amino-1-(5-phospho-D-ribosyl)imidazole: step 3/3. It participates in cofactor biosynthesis; thiamine diphosphate biosynthesis; thiamine phosphate from 4-amino-2-methyl-5-diphosphomethylpyrimidine and 4-methyl-5-(2-phosphoethyl)-thiazole: step 1/1. Functionally, condenses 4-methyl-5-(beta-hydroxyethyl)thiazole monophosphate (THZ-P) and 2-methyl-4-amino-5-hydroxymethyl pyrimidine pyrophosphate (HMP-PP) to form thiamine monophosphate (TMP). In terms of biological role, catalyzes the phosphorylation of hydroxymethylpyrimidine phosphate (HMP-P) to HMP-PP, and of HMP to HMP-P. In Geobacter sulfurreducens (strain ATCC 51573 / DSM 12127 / PCA), this protein is Thiamine biosynthesis bifunctional protein ThiED (thiDE).